An 82-amino-acid chain; its full sequence is Small ribosomal subunit protein bS18 (82 aa).

Residues 1-20 (MVDINQIPTRRPFHRRRKTC) form a disordered region.

The protein belongs to the bacterial ribosomal protein bS18 family. As to quaternary structure, part of the 30S ribosomal subunit. Forms a tight heterodimer with protein bS6.

In terms of biological role, binds as a heterodimer with protein bS6 to the central domain of the 16S rRNA, where it helps stabilize the platform of the 30S subunit. This is Small ribosomal subunit protein bS18 from Brucella anthropi (strain ATCC 49188 / DSM 6882 / CCUG 24695 / JCM 21032 / LMG 3331 / NBRC 15819 / NCTC 12168 / Alc 37) (Ochrobactrum anthropi).